The sequence spans 273 residues: Formamidopyrimidine-DNA glycosylase (273 aa).

Pro-2 serves as the catalytic Schiff-base intermediate with DNA. The Proton donor role is filled by Glu-3. Lys-59 functions as the Proton donor; for beta-elimination activity in the catalytic mechanism. DNA is bound by residues His-92 and Arg-111. Residues 239–273 (KVYGKTDEPCVVCGTPIEKIKLNGRGTHFCPNCQK) form an FPG-type zinc finger. The Proton donor; for delta-elimination activity role is filled by Arg-263.

The protein belongs to the FPG family. As to quaternary structure, monomer. It depends on Zn(2+) as a cofactor.

It catalyses the reaction Hydrolysis of DNA containing ring-opened 7-methylguanine residues, releasing 2,6-diamino-4-hydroxy-5-(N-methyl)formamidopyrimidine.. The enzyme catalyses 2'-deoxyribonucleotide-(2'-deoxyribose 5'-phosphate)-2'-deoxyribonucleotide-DNA = a 3'-end 2'-deoxyribonucleotide-(2,3-dehydro-2,3-deoxyribose 5'-phosphate)-DNA + a 5'-end 5'-phospho-2'-deoxyribonucleoside-DNA + H(+). In terms of biological role, involved in base excision repair of DNA damaged by oxidation or by mutagenic agents. Acts as a DNA glycosylase that recognizes and removes damaged bases. Has a preference for oxidized purines, such as 7,8-dihydro-8-oxoguanine (8-oxoG). Has AP (apurinic/apyrimidinic) lyase activity and introduces nicks in the DNA strand. Cleaves the DNA backbone by beta-delta elimination to generate a single-strand break at the site of the removed base with both 3'- and 5'-phosphates. The sequence is that of Formamidopyrimidine-DNA glycosylase from Listeria monocytogenes serovar 1/2a (strain ATCC BAA-679 / EGD-e).